Consider the following 375-residue polypeptide: Lipid-A-disaccharide synthase (375 aa).

This sequence belongs to the LpxB family.

It catalyses the reaction a lipid X + a UDP-2-N,3-O-bis[(3R)-3-hydroxyacyl]-alpha-D-glucosamine = a lipid A disaccharide + UDP + H(+). Its pathway is bacterial outer membrane biogenesis; LPS lipid A biosynthesis. In terms of biological role, condensation of UDP-2,3-diacylglucosamine and 2,3-diacylglucosamine-1-phosphate to form lipid A disaccharide, a precursor of lipid A, a phosphorylated glycolipid that anchors the lipopolysaccharide to the outer membrane of the cell. This Pseudomonas putida (strain W619) protein is Lipid-A-disaccharide synthase.